A 312-amino-acid chain; its full sequence is Glyoxylate/hydroxypyruvate reductase A (312 aa).

Residue Arg-227 is part of the active site. His-275 acts as the Proton donor in catalysis.

The protein belongs to the D-isomer specific 2-hydroxyacid dehydrogenase family. GhrA subfamily.

Its subcellular location is the cytoplasm. The enzyme catalyses glycolate + NADP(+) = glyoxylate + NADPH + H(+). It carries out the reaction (R)-glycerate + NAD(+) = 3-hydroxypyruvate + NADH + H(+). The catalysed reaction is (R)-glycerate + NADP(+) = 3-hydroxypyruvate + NADPH + H(+). Functionally, catalyzes the NADPH-dependent reduction of glyoxylate and hydroxypyruvate into glycolate and glycerate, respectively. This chain is Glyoxylate/hydroxypyruvate reductase A, found in Escherichia coli O6:K15:H31 (strain 536 / UPEC).